The primary structure comprises 146 residues: Protein phosphatase 1 regulatory subunit 14D (146 aa).

The segment covering 1 to 16 has biased composition (polar residues); the sequence is MLSSSAASCTSPNPDT. A disordered region spans residues 1–57; it reads MLSSSAASCTSPNPDTDNPDKKVRWSSEKRRRASSTDSESKTHLDISKLPRSRRPSR. Basic and acidic residues-rich tracts occupy residues 18–28 and 38–48; these read NPDKKVRWSSE and SESKTHLDISK. The segment at 21–25 is interaction with protein phosphatase 1; the sequence is KKVRW.

It belongs to the PP1 inhibitor family. Post-translationally, phosphorylated on several residues.

The protein resides in the cytoplasm. Inhibitor of PPP1CA. Has inhibitory activity only when phosphorylated, creating a molecular switch for regulating the phosphorylation status of PPP1CA substrates and smooth muscle contraction. The polypeptide is Protein phosphatase 1 regulatory subunit 14D (Ppp1r14d) (Rattus norvegicus (Rat)).